A 339-amino-acid chain; its full sequence is MSGSYWTSMQRQKWQHTKPSLARERQRLWVMECQLFPQGLNIIVDSKPNSADSSNGNAANNGGGNGRSQLVATTKNIPITHRDLHYDKDYNLRIYCYFLIMKLGRRLNIRQYALATAHIYLSRFLLKASVREVNLYLLVTTCVYLACKVEECPQYIRTLVSEARSLWPEFIPPDPTKVTEFEFYLIEELQCYLIVHHPYKSMEQIVEALKEEPFKLTFTSDELQNCWSLINDSFINDVHLTYAPHIIAMACLFITVSIQGSNTKELSLTSAVTETLTSQSSLTPQQQTFFRFLAESHVDLEEVMDTIQQQIILYDHWDRYHEPWIKYLLHTLYLRPLSA.

Residues 48 to 67 form a disordered region; that stretch reads PNSADSSNGNAANNGGGNGR. Low complexity predominate over residues 49–60; it reads NSADSSNGNAAN. Residues 93–194 enclose the Cyclin N-terminal domain; the sequence is RIYCYFLIMK…LIEELQCYLI (102 aa).

The protein belongs to the cyclin family. Cyclin C subfamily. As to quaternary structure, component of the SRB8-11 complex, a regulatory module of the Mediator complex.

Its subcellular location is the nucleus. Component of the SRB8-11 complex. The SRB8-11 complex is a regulatory module of the Mediator complex which is itself involved in regulation of basal and activated RNA polymerase II-dependent transcription. The SRB8-11 complex may be involved in the transcriptional repression of a subset of genes regulated by Mediator. It may inhibit the association of the Mediator complex with RNA polymerase II to form the holoenzyme complex. The SRB8-11 complex phosphorylates the C-terminal domain (CTD) of the largest subunit of RNA polymerase II. The polypeptide is RNA polymerase II holoenzyme cyclin-like subunit (SSN8) (Candida glabrata (strain ATCC 2001 / BCRC 20586 / JCM 3761 / NBRC 0622 / NRRL Y-65 / CBS 138) (Yeast)).